Consider the following 863-residue polypeptide: NACHT, LRR and PYD domains-containing protein 4B (863 aa).

One can recognise a Pyrin domain in the interval 1–93 (MASLFSDFGF…TNRATGEIAA (93 aa)). The region spanning 143–466 (KMVVLQGVAG…FYLLHSEMDH (324 aa)) is the NACHT domain. 149 to 156 (GVAGIGKT) contributes to the ATP binding site. LRR repeat units follow at residues 618 to 643 (WHQICSVFLRNKDIKTLRIEDTIFNE), 683 to 706 (SYNLEELYLRGTFLSHSDVEMLCD), 717 to 740 (ILDLANCSLCEHSWDYLSDVLRQN), 741 to 763 (KSLRYLNISYNNLKDEGLKALCR), 765 to 782 (LTLPNSALHSLSLEACQL), 797 to 824 (YKCLRRINLAKNSLGFSGLFVLCKAMKD), and 843 to 863 (SQEFLLSEMERNKILSIENGV).

The protein belongs to the NLRP family.

In terms of biological role, may be involved in inflammation and recognition of cytosolic pathogen-associated molecular patterns (PAMPs) not intercepted by membrane-bound receptors. The sequence is that of NACHT, LRR and PYD domains-containing protein 4B (Nlrp4b) from Mus musculus (Mouse).